The following is a 309-amino-acid chain: MNITILSGGTGTPKLIQGFKEIIPNEDISVIVNTGEDTYIGDIYLSPDIDTVLYTFSDLINDETWYGLKGDTFICHEQLKKFGFDEVLKIGDKDRALKMHKASSLKNGVPMSEIVDIERKSLSLKSKIYPMSNERVESKVLIEENNEKILLKFHDFWIFRKGNAKVLDIFYENSNYAKAADGVIKAIEESDFILIGPSNPITSIGPILSISEIKNALKEKLVFAVSPIVGENPVSGPAGTLMNAKGYPVSAVGVYEYYKDIVDVLVLDNSDINKKKDINCEVLYANTIMKTIDDKITLARNILDYYKSR.

Residues D50 and K89 each coordinate 7,8-didemethyl-8-hydroxy-5-deazariboflavin.

It belongs to the CofD family. As to quaternary structure, homodimer. It depends on Mg(2+) as a cofactor.

The catalysed reaction is (2S)-lactyl-2-diphospho-5'-guanosine + 7,8-didemethyl-8-hydroxy-5-deazariboflavin = oxidized coenzyme F420-0 + GMP + H(+). It participates in cofactor biosynthesis; coenzyme F420 biosynthesis. In terms of biological role, catalyzes the transfer of the 2-phospholactate moiety from (2S)-lactyl-2-diphospho-5'-guanosine to 7,8-didemethyl-8-hydroxy-5-deazariboflavin (FO) with the formation of oxidized coenzyme F420-0 and GMP. The protein is 2-phospho-L-lactate transferase of Methanococcus maripaludis (strain C5 / ATCC BAA-1333).